The following is a 726-amino-acid chain: Mitotic spindle checkpoint protein MAD1 (726 aa).

A disordered region spans residues 1-30 (MILRTPQPKRLRSDAGESPFPTGATGSGNQ). Coiled coils occupy residues 68 to 246 (ADVL…LKLI) and 272 to 625 (SDNS…VFAD).

The protein belongs to the MAD1 family. Homodimer. Part of the mitotic checkpoint complex (MCC). Interacts with MAD2 and NUA.

The protein localises to the nucleus envelope. Functionally, required for the execution of the mitotic checkpoint which monitors the process of kinetochore-spindle attachment and delays the onset of anaphase when this process is not complete. It inhibits the activity of the anaphase promoting complex by sequestering CDC20 until all chromosomes are aligned at the metaphase plate. Required for anchoring MAD2 to the nuclear envelope. In Arabidopsis thaliana (Mouse-ear cress), this protein is Mitotic spindle checkpoint protein MAD1.